The chain runs to 69 residues: Cecropin-like peptide 1 (69 aa).

The first 23 residues, Met-1–Ala-23, serve as a signal peptide directing secretion. Gln-68 is modified (glutamine amide).

In terms of tissue distribution, following bacterial infection, expressed in fat body, trachea and muscle.

The protein resides in the secreted. Antimicrobial peptide active against Gram-negative bacteria E.coli KCCM 11234 (MIC&lt;=1.03 uM), E.aerogenes KCCM 12177 (MIC&lt;=2.07 uM) and P.aeruginosa KCCM 11328 (MIC&lt;=2.07 uM). Not active against various Gram-positive bacteria at concentrations up to 4.14 uM. The protein is Cecropin-like peptide 1 of Hermetia illucens (Black soldier fly).